The primary structure comprises 347 residues: A-type ATP synthase subunit C (347 aa).

The protein belongs to the V-ATPase V0D/AC39 subunit family. In terms of assembly, has multiple subunits with at least A(3), B(3), C, D, E, F, H, I and proteolipid K(x).

Its subcellular location is the cell membrane. Component of the A-type ATP synthase that produces ATP from ADP in the presence of a proton gradient across the membrane. The chain is A-type ATP synthase subunit C from Haloquadratum walsbyi (strain DSM 16790 / HBSQ001).